Consider the following 79-residue polypeptide: Sec-independent protein translocase protein TatA (79 aa).

A helical transmembrane segment spans residues 1–21 (MGGWSSPSHWLIILLIVVLLF). Over residues 52 to 61 (KNTQKIEENK) the composition is skewed to basic and acidic residues. A disordered region spans residues 52–79 (KNTQKIEENKNTTNNTSADASIDKTKKA).

Belongs to the TatA/E family. As to quaternary structure, the Tat system comprises two distinct complexes: a TatABC complex, containing multiple copies of TatA, TatB and TatC subunits, and a separate TatA complex, containing only TatA subunits. Substrates initially bind to the TatABC complex, which probably triggers association of the separate TatA complex to form the active translocon.

The protein localises to the cell inner membrane. Part of the twin-arginine translocation (Tat) system that transports large folded proteins containing a characteristic twin-arginine motif in their signal peptide across membranes. TatA could form the protein-conducting channel of the Tat system. This is Sec-independent protein translocase protein TatA from Campylobacter jejuni subsp. jejuni serotype O:6 (strain 81116 / NCTC 11828).